We begin with the raw amino-acid sequence, 242 residues long: Probable transcriptional regulatory protein MHP7448_0474 (242 aa).

Belongs to the TACO1 family.

Its subcellular location is the cytoplasm. In Mesomycoplasma hyopneumoniae (strain 7448) (Mycoplasma hyopneumoniae), this protein is Probable transcriptional regulatory protein MHP7448_0474.